Here is a 203-residue protein sequence, read N- to C-terminus: Pacifastin-like protease inhibitor cvp4 (203 aa).

The first 19 residues, 1–19 (MGFLACALLVVATAHAATA), serve as a signal peptide directing secretion. 3 consecutive Pacifastin domains span residues 23 to 59 (PETC…CDRN), 85 to 121 (DEPC…CDRN), and 147 to 184 (DESC…CDRY). Intrachain disulfides connect Cys26–Cys41, Cys36–Cys56, Cys39–Cys51, Cys88–Cys103, Cys98–Cys118, and Cys101–Cys113. A compositionally biased stretch (basic and acidic residues) spans 129 to 148 (RKYPEPEKWNSEKERKKSDE). A disordered region spans residues 129–150 (RKYPEPEKWNSEKERKKSDESC). 3 cysteine pairs are disulfide-bonded: Cys150/Cys165, Cys160/Cys181, and Cys163/Cys176.

The protein belongs to the protease inhibitor I19 family. In terms of tissue distribution, expressed by the venom gland.

The protein resides in the secreted. Its function is as follows. Inhibits trypsin activity and prophenoloxidase (PPO) activation, an enzyme essential for both clotting and insect innate immune responses. It does not inhibit activity of chymotrypsin and protease K, and has no effect on phenoloxidase (PO) activity. The protein is Pacifastin-like protease inhibitor cvp4 of Pimpla hypochondriaca (Parasitoid wasp).